We begin with the raw amino-acid sequence, 304 residues long: Pyridoxal 5'-phosphate synthase subunit PdxS (304 aa).

Asp34 contributes to the D-ribose 5-phosphate binding site. Lys91 functions as the Schiff-base intermediate with D-ribose 5-phosphate in the catalytic mechanism. Residue Gly163 participates in D-ribose 5-phosphate binding. Arg175 is a D-glyceraldehyde 3-phosphate binding site. D-ribose 5-phosphate contacts are provided by residues Gly224 and 245-246 (GS).

This sequence belongs to the PdxS/SNZ family. In terms of assembly, in the presence of PdxT, forms a dodecamer of heterodimers.

It carries out the reaction aldehydo-D-ribose 5-phosphate + D-glyceraldehyde 3-phosphate + L-glutamine = pyridoxal 5'-phosphate + L-glutamate + phosphate + 3 H2O + H(+). It participates in cofactor biosynthesis; pyridoxal 5'-phosphate biosynthesis. Its function is as follows. Catalyzes the formation of pyridoxal 5'-phosphate from ribose 5-phosphate (RBP), glyceraldehyde 3-phosphate (G3P) and ammonia. The ammonia is provided by the PdxT subunit. Can also use ribulose 5-phosphate and dihydroxyacetone phosphate as substrates, resulting from enzyme-catalyzed isomerization of RBP and G3P, respectively. The sequence is that of Pyridoxal 5'-phosphate synthase subunit PdxS from Cutibacterium acnes (strain DSM 16379 / KPA171202) (Propionibacterium acnes).